The sequence spans 1985 residues: Voltage-dependent L-type calcium channel subunit alpha-1F (1985 aa).

The segment covering 1–11 (MSESEVGKDTT) has biased composition (basic and acidic residues). The segment at 1–56 (MSESEVGKDTTPEPSPANGTGPGPEWGLCPGPPTVGTDTSGASGLGTPRRRTQHNK) is disordered. Residues 1 to 92 (MSESEVGKDT…RSCISIVEWK (92 aa)) are Cytoplasmic-facing. The stretch at 79 to 375 (NPIRRSCISI…LVLGVLSGEF (297 aa)) is one I repeat. The helical transmembrane segment at 93-111 (PFDILILLTIFANCVALGV) threads the bilayer. At 112 to 129 (YIPFPEDDSNTANHNLEQ) the chain is on the extracellular side. The chain crosses the membrane as a helical span at residues 130-149 (VEYVFLVIFTVETVLKIVAY). The Cytoplasmic portion of the chain corresponds to 150-161 (GLVLHPSAYIRN). A helical transmembrane segment spans residues 162 to 180 (GWNLLDFIIVVVGLFSVLL). The Extracellular segment spans residues 181–201 (EQGPGRPGDAPHTGGKPGGFD). A helical transmembrane segment spans residues 202–220 (VKALRAFRVLRPLRLVSGV). The Cytoplasmic segment spans residues 221–239 (PSLHIVVNSIMKALVPLLH). The chain crosses the membrane as a helical span at residues 240 to 259 (IALLVLFVIIIYAIIGLELF). At 260–347 (LGRMHKTCYF…WMQDAMGYEL (88 aa)) the chain is on the extracellular side. A glycan (N-linked (GlcNAc...) asparagine) is linked at Asn-295. Glu-330 contacts Ca(2+). Residues 348–372 (PWVYFVSLVIFGSFFVLNLVLGVLS) traverse the membrane as a helical segment. At 373-529 (GEFSKEREKA…ARCRRAVKSN (157 aa)) the chain is on the cytoplasmic side. The interval 395–412 (QQMEEDLRGYLDWITQAE) is binding to the beta subunit. The span at 455–469 (SHSTRSTHSTSSHAS) shows a compositional bias: low complexity. The segment at 455 to 490 (SHSTRSTHSTSSHASLPASDTGSMTDTPGDEDEEEG) is disordered. One copy of the II repeat lies at 515 to 761 (NRGLRARCRR…VFLAIAVDNL (247 aa)). A helical membrane pass occupies residues 530–549 (ACYWAVLLLVFLNTLTIASE). At 550-564 (HHGQPLWLTQTQEYA) the chain is on the extracellular side. Residues 565 to 583 (NKVLLCLFTVEMLLKLYGL) form a helical membrane-spanning segment. Residues 584-591 (GPSVYVAS) are Cytoplasmic-facing. A helical membrane pass occupies residues 592-610 (FFNRFDCFVVCGGILETTL). The Extracellular segment spans residues 611–620 (VEVGAMQPLG). The helical transmembrane segment at 621–639 (ISVLRCVRLLRIFKVTRHW) threads the bilayer. The Cytoplasmic segment spans residues 640–658 (ASLSNLVASLLNSMKSIAS). Residues 659–679 (LLLLLFLFIIIFSLLGMQLFG) form a helical membrane-spanning segment. The Extracellular segment spans residues 680–733 (GKFNFDQTHTKRSTFDTFPQALLTVFQILTGEDWNVVMYDGIMAYGGPFFPGML). Ca(2+) is bound at residue Glu-711. Residues 734–758 (VCVYFIILFICGNYILLNVFLAIAV) traverse the membrane as a helical segment. At 759–876 (DNLASGDAGT…KACHTLIHHH (118 aa)) the chain is on the cytoplasmic side. A disordered region spans residues 766–834 (AGTAKDKGRE…EEEEENGAGH (69 aa)). Positions 768-787 (TAKDKGREKSSEGNPPKENK) are enriched in basic and acidic residues. The segment covering 810–830 (MEEEEEEEEEEEEEEEEEEEN) has biased composition (acidic residues). Residues 858 to 1140 (CLSQTNPLRK…FFMMNIFVGF (283 aa)) form an III repeat. The helical transmembrane segment at 877 to 895 (IFTSLILVFIILSSVSLAA) threads the bilayer. Residues 896–911 (EDPIRAHSFRNHILGY) are Extracellular-facing. The chain crosses the membrane as a helical span at residues 912 to 931 (FDYAFTSIFTVEILLKMTVF). The Cytoplasmic portion of the chain corresponds to 932–943 (GAFLHRGSFCRS). The helical transmembrane segment at 944–962 (WFNLLDLLVVSVSLISFGI) threads the bilayer. The Extracellular segment spans residues 963–968 (HSSAIS). Residues 969–988 (VVKILRVLRVLRPLRAINRA) form a helical membrane-spanning segment. At 989–1007 (KGLKHVVQCVFVAIRTIGN) the chain is on the cytoplasmic side. A helical transmembrane segment spans residues 1008-1027 (IMIVTTLLQFMFACIGVQLF). The Extracellular segment spans residues 1028-1117 (KGKFYSCTDE…EGPIYNYHVE (90 aa)). Residues 1065–1155 (RLWVNSDFNF…RAQGEQEYQN (91 aa)) form a dihydropyridine binding region. Position 1091 (Glu-1091) interacts with Ca(2+). A helical membrane pass occupies residues 1118-1138 (ISVFFIVYIIIIAFFMMNIFV). Over 1139 to 1195 (GFVIITFRAQGEQEYQNCELDKNQRQCVEYALKAQPLRRYIPKNPHQYRVWATVNSR) the chain is Cytoplasmic. The IV repeat unit spans residues 1182–1449 (NPHQYRVWAT…LFVAVIMDNF (268 aa)). Residues 1196 to 1214 (AFEYLMFLLILLNTVALAM) traverse the membrane as a helical segment. The Extracellular portion of the chain corresponds to 1215-1229 (QHYEQTAPFNYAMDI). Residues 1230–1249 (LNMVFTGLFTIEMVLKIIAF) traverse the membrane as a helical segment. The Cytoplasmic segment spans residues 1250 to 1256 (KPKHYFA). The chain crosses the membrane as a helical span at residues 1257–1278 (DAWNTFDALIVVGSVVDIAVTE). At 1279 to 1295 (VNNGGHLGESSEDTSRI) the chain is on the extracellular side. Residues 1296-1315 (SITFFRLFRVMRLVKLLSKG) traverse the membrane as a helical segment. Residues 1316–1334 (EGIRTLLWTFIKSFQALPY) are Cytoplasmic-facing. The chain crosses the membrane as a helical span at residues 1335–1354 (VALLIAMIFFIYAVIGMQMF). The Extracellular segment spans residues 1355 to 1421 (GLVALQDGTQ…GEEFTCGSSF (67 aa)). A dihydropyridine binding region spans residues 1402–1468 (RCDPESDFGP…LGPHHLDEFK (67 aa)). The interval 1414–1457 (EFTCGSSFAIVYFISFFMLCAFLIINLFVAVIMDNFDYLTRDWS) is phenylalkylamine binding. The chain crosses the membrane as a helical span at residues 1422 to 1446 (AIVYFISFFMLCAFLIINLFVAVIM). At 1447–1982 (DNFDYLTRDW…EDLGDEMACV (536 aa)) the chain is on the cytoplasmic side. 2 disordered regions span residues 1643-1729 (VTEE…PHRR) and 1746-1778 (LKGT…SFEP). Positions 1644–1665 (TEEEEEEEEAVGQEAEEEEAEN) are enriched in acidic residues. 2 stretches are compositionally biased toward polar residues: residues 1675–1687 (DSQP…SRIS) and 1713–1724 (NSRQPSVIQAGS). Residues 1767–1776 (DLDRAGRDSF) show a composition bias toward basic and acidic residues.

The protein belongs to the calcium channel alpha-1 subunit (TC 1.A.1.11) family. CACNA1F subfamily. Voltage-dependent calcium channels are multisubunit complexes, consisting of alpha-1, alpha-2, beta and delta subunits in a 1:1:1:1 ratio. The channel activity is directed by the pore-forming and voltage-sensitive alpha-1 subunit. In many cases, this subunit is sufficient to generate voltage-sensitive calcium channel activity. The auxiliary subunits beta and alpha-2/delta linked by a disulfide bridge regulate the channel activity. Interacts (via IQ domain) with CABP4; in a calcium independent manner. Expressed in the inner and outer nuclear layers and the genglion cell layer of the retina.

The protein resides in the membrane. The enzyme catalyses Ca(2+)(in) = Ca(2+)(out). In terms of biological role, voltage-sensitive calcium channels (VSCC) mediate the entry of calcium ions into excitable cells and are also involved in a variety of calcium-dependent processes, including muscle contraction, hormone or neurotransmitter release, gene expression, cell motility, cell division and cell death. The isoform alpha-1F gives rise to L-type calcium currents. Long-lasting (L-type) calcium channels belong to the 'high-voltage activated' (HVA) group. They are blocked by dihydropyridines (DHP), phenylalkylamines, and by benzothiazepines. Activates at more negative voltages and does not undergo calcium-dependent inactivation (CDI), due to incoming calcium ions, during depolarization. The protein is Voltage-dependent L-type calcium channel subunit alpha-1F of Mus musculus (Mouse).